A 261-amino-acid polypeptide reads, in one-letter code: tRNA (guanine-N(1)-)-methyltransferase (261 aa).

S-adenosyl-L-methionine-binding positions include glycine 113 and 133–138 (IGDYVL).

Belongs to the RNA methyltransferase TrmD family. Homodimer.

Its subcellular location is the cytoplasm. It catalyses the reaction guanosine(37) in tRNA + S-adenosyl-L-methionine = N(1)-methylguanosine(37) in tRNA + S-adenosyl-L-homocysteine + H(+). Functionally, specifically methylates guanosine-37 in various tRNAs. This is tRNA (guanine-N(1)-)-methyltransferase from Xylella fastidiosa (strain M23).